Reading from the N-terminus, the 89-residue chain is Barrier-to-autointegration factor (89 aa).

At methionine 1 the chain carries N-acetylmethionine. Threonine 2 is subject to N-acetylthreonine; in Barrier-to-autointegration factor, N-terminally processed. A phosphothreonine; by VRK1 and VRK2 mark is found at threonine 2 and threonine 3. Position 4 is a phosphoserine; by VRK1 and VRK2 (serine 4). A HhH domain is found at valine 20–glutamate 35.

This sequence belongs to the BAF family. As to quaternary structure, homodimer. Heterodimerizes with BANF2. Interacts with ANKLE2/LEM4, leading to decreased phosphorylation by VRK1 and promoting dephosphorylation by protein phosphatase 2A (PP2A). Binds non-specifically to double-stranded DNA, and is found as a hexamer or dodecamer upon DNA binding. Binds to LEM domain-containing nuclear proteins such as LEMD3/MAN1, TMPO/LAP2 and EMD (emerin). Interacts with ANKLE1 (via LEM domain); the interaction may favor BANF1 dimerization. Interacts with CRX and LMNA (lamin-A). Binds linker histone H1.1 and core histones H3. Interacts with LEMD2 (via LEM domain). Interacts with PARP1; interaction takes place in response to oxidative DNA damage. Ser-4 is the major site of phosphorylation as compared to Thr-2 and Thr-3. Phosphorylation on Thr-2; Thr-3 and Ser-4 disrupts its ability to bind DNA and reduces its ability to bind LEM domain-containing proteins. Non phosphorylated BAF seems to enhance binding between EMD and LMNA. Dephosphorylated by protein phosphatase 2A (PP2A) following interaction with ANKLE2/LEM4 during mitotic exit, leading to mitotic nuclear envelope reassembly.

The protein localises to the nucleus. The protein resides in the chromosome. It is found in the nucleus envelope. It localises to the cytoplasm. In terms of biological role, non-specific DNA-binding protein that plays key roles in mitotic nuclear reassembly, chromatin organization, DNA damage response, gene expression and intrinsic immunity against foreign DNA. Contains two non-specific double-stranded DNA (dsDNA)-binding sites which promote DNA cross-bridging. Plays a key role in nuclear membrane reformation at the end of mitosis by driving formation of a single nucleus in a spindle-independent manner. Transiently cross-bridges anaphase chromosomes via its ability to bridge distant DNA sites, leading to the formation of a dense chromatin network at the chromosome ensemble surface that limits membranes to the surface. Also acts as a negative regulator of innate immune activation by restricting CGAS activity toward self-DNA upon acute loss of nuclear membrane integrity. Outcompetes CGAS for DNA-binding, thereby preventing CGAS activation and subsequent damaging autoinflammatory responses. Also involved in DNA damage response: interacts with PARP1 in response to oxidative stress, thereby inhibiting the ADP-ribosyltransferase activity of PARP1. Involved in the recognition of exogenous dsDNA in the cytosol: associates with exogenous dsDNA immediately after its appearance in the cytosol at endosome breakdown and is required to avoid autophagy. The sequence is that of Barrier-to-autointegration factor from Mus musculus (Mouse).